The chain runs to 546 residues: Probable protein kinase UbiB (546 aa).

The region spanning 124–502 (DFDIKPLASA…QARQGQSRYL (379 aa)) is the Protein kinase domain. ATP-binding positions include 130 to 138 (LASASIAQV) and K153. D288 serves as the catalytic Proton acceptor. The next 2 membrane-spanning stretches (helical) occupy residues 499–519 (SRYL…LLIS) and 521–541 (VEAD…WIIG).

The protein belongs to the ABC1 family. UbiB subfamily.

It localises to the cell inner membrane. It participates in cofactor biosynthesis; ubiquinone biosynthesis [regulation]. Functionally, is probably a protein kinase regulator of UbiI activity which is involved in aerobic coenzyme Q (ubiquinone) biosynthesis. The polypeptide is Probable protein kinase UbiB (Pectobacterium carotovorum subsp. carotovorum (strain PC1)).